Consider the following 188-residue polypeptide: Probable nicotinate-nucleotide adenylyltransferase (188 aa).

The protein belongs to the NadD family.

It catalyses the reaction nicotinate beta-D-ribonucleotide + ATP + H(+) = deamido-NAD(+) + diphosphate. It functions in the pathway cofactor biosynthesis; NAD(+) biosynthesis; deamido-NAD(+) from nicotinate D-ribonucleotide: step 1/1. Functionally, catalyzes the reversible adenylation of nicotinate mononucleotide (NaMN) to nicotinic acid adenine dinucleotide (NaAD). This Listeria monocytogenes serotype 4b (strain F2365) protein is Probable nicotinate-nucleotide adenylyltransferase.